The sequence spans 1501 residues: EF-hand calcium-binding domain-containing protein 6 (1501 aa).

The interval Arg18–Thr47 is disordered. Positions Arg35–Thr47 are enriched in polar residues. EF-hand domains lie at Asp70–Pro105, Lys172–Lys207, Lys297–Gln332, Asp403–Lys438, Leu439–Met474, Arg504–Phe539, and Gln634–Pro669. A disordered region spans residues Glu699 to Lys718. EF-hand domains lie at Glu741–Asn776, Asn847–Pro882, Leu883–Pro918, Asp964–Ser999, Ser1069–Lys1104, Ser1176–Ile1211, and Leu1212–Ala1247. Asp754, Asp756, Asp758, and Asp765 together coordinate Ca(2+). Thr884 carries the phosphothreonine modification. Residues Ala1246–Leu1307 are disordered. 2 stretches are compositionally biased toward polar residues: residues Gly1270–Thr1279 and Ser1286–Ile1301. Ser1290 bears the Phosphoserine mark. 2 positions are modified to phosphothreonine: Thr1294 and Thr1304. The tract at residues Gly1303–Gln1501 is interaction with PARK7. 3 EF-hand domains span residues Ile1359–Ala1394, His1434–Asn1469, and Leu1470–Gln1501. The interval Asn1407–Gln1501 is interaction with AR.

In terms of assembly, microtubule inner protein component of sperm flagellar doublet microtubules. Binds PARK7. Part of a ternary complex containing PARK7, EFCAB6/DJBP and AR. Specifically expressed in the testis.

The protein resides in the nucleus. It is found in the cytoplasm. Its subcellular location is the cytoskeleton. It localises to the flagellum axoneme. Its function is as follows. Negatively regulates the androgen receptor by recruiting histone deacetylase complex, and protein DJ-1 antagonizes this inhibition by abrogation of this complex. Microtubule inner protein (MIP) part of the dynein-decorated doublet microtubules (DMTs) in cilia axoneme, which is required for motile cilia beating. The sequence is that of EF-hand calcium-binding domain-containing protein 6 from Homo sapiens (Human).